The primary structure comprises 827 residues: uncharacterized protein (827 aa).

This is an uncharacterized protein from Methanocaldococcus jannaschii (strain ATCC 43067 / DSM 2661 / JAL-1 / JCM 10045 / NBRC 100440) (Methanococcus jannaschii).